We begin with the raw amino-acid sequence, 227 residues long: Mitochondrial cardiolipin hydrolase (227 aa).

Residues 1–14 (MDVFKQMSFKELMK) are Mitochondrial intermembrane-facing. A helical membrane pass occupies residues 15 to 33 (VLGLGTVAFVLGVEWLNWL). Topologically, residues 34-227 (TRRLRDSRGP…LQSKNGQIKK (194 aa)) are cytoplasmic. A PLD phosphodiesterase domain is found at 153-180 (SAVHMHHKFALVDGRKLISGSLNWTLTA). Residues histidine 158, lysine 160, and aspartate 165 contribute to the active site.

It belongs to the phospholipase D family. MitoPLD/Zucchini subfamily. Homodimer.

It localises to the mitochondrion outer membrane. The catalysed reaction is a cardiolipin + H2O = a 1,2-diacyl-sn-glycero-3-phospho-(1'-sn-glycerol) + a 1,2-diacyl-sn-glycero-3-phosphate + H(+). In terms of biological role, presents phospholipase and nuclease activities, depending on the different physiological conditions. Plays a key role in mitochondrial fusion and fission via its phospholipase activity. In its phospholipase role, it uses the mitochondrial lipid cardiolipin as substrate to generate phosphatidate (PA or 1,2-diacyl-sn-glycero-3-phosphate), a second messenger signaling lipid. Production of PA facilitates Mitofusin-mediated fusion, whereas the cleavage of PA by the Lipin family of phosphatases produces diacylgycerol (DAG) which promotes mitochondrial fission. Regulates mitochondrial shape through facilitating mitochondrial fusion. During spermatogenesis, plays a critical role in PIWI-interacting RNA (piRNA) biogenesis. piRNAs provide essential protection against the activity of mobile genetic elements. piRNA-mediated transposon silencing is thus critical for maintaining genome stability, in particular in germline cells when transposons are mobilized as a consequence of wide-spread genomic demethylation. Has been shown to be a backbone-non-specific, single strand-specific nuclease, cleaving either RNA or DNA substrates with similar affinity. Produces 5' phosphate and 3' hydroxyl termini, suggesting it could directly participate in the processing of primary piRNA transcripts. Has been proposed to act as a cardiolipin hydrolase to generate phosphatidic acid at mitochondrial surface. Although it cannot be excluded that it can act as a phospholipase in some circumstances, this activity could not be confirmed. This chain is Mitochondrial cardiolipin hydrolase (pld6), found in Danio rerio (Zebrafish).